A 479-amino-acid polypeptide reads, in one-letter code: Aspartyl/glutamyl-tRNA(Asn/Gln) amidotransferase subunit B (479 aa).

It belongs to the GatB/GatE family. GatB subfamily. Heterotrimer of A, B and C subunits.

It catalyses the reaction L-glutamyl-tRNA(Gln) + L-glutamine + ATP + H2O = L-glutaminyl-tRNA(Gln) + L-glutamate + ADP + phosphate + H(+). It carries out the reaction L-aspartyl-tRNA(Asn) + L-glutamine + ATP + H2O = L-asparaginyl-tRNA(Asn) + L-glutamate + ADP + phosphate + 2 H(+). Allows the formation of correctly charged Asn-tRNA(Asn) or Gln-tRNA(Gln) through the transamidation of misacylated Asp-tRNA(Asn) or Glu-tRNA(Gln) in organisms which lack either or both of asparaginyl-tRNA or glutaminyl-tRNA synthetases. The reaction takes place in the presence of glutamine and ATP through an activated phospho-Asp-tRNA(Asn) or phospho-Glu-tRNA(Gln). This chain is Aspartyl/glutamyl-tRNA(Asn/Gln) amidotransferase subunit B, found in Streptococcus suis (strain 98HAH33).